Reading from the N-terminus, the 222-residue chain is Thymidylate kinase (222 aa).

Gly7–Ser14 contacts ATP.

This sequence belongs to the thymidylate kinase family.

The catalysed reaction is dTMP + ATP = dTDP + ADP. Its function is as follows. Phosphorylation of dTMP to form dTDP in both de novo and salvage pathways of dTTP synthesis. This Chlorobium chlorochromatii (strain CaD3) protein is Thymidylate kinase.